Here is a 221-residue protein sequence, read N- to C-terminus: Phosphoenolpyruvate guanylyltransferase (221 aa).

The phosphoenolpyruvate site is built by Thr154, Gly169, and Ser172.

Belongs to the CofC family.

It carries out the reaction phosphoenolpyruvate + GTP + H(+) = enolpyruvoyl-2-diphospho-5'-guanosine + diphosphate. Its pathway is cofactor biosynthesis; coenzyme F420 biosynthesis. Functionally, guanylyltransferase that catalyzes the activation of phosphoenolpyruvate (PEP) as enolpyruvoyl-2-diphospho-5'-guanosine, via the condensation of PEP with GTP. It is involved in the biosynthesis of coenzyme F420, a hydride carrier cofactor. The sequence is that of Phosphoenolpyruvate guanylyltransferase from Mycolicibacterium smegmatis (strain ATCC 700084 / mc(2)155) (Mycobacterium smegmatis).